The sequence spans 156 residues: Small ribosomal subunit protein uS7 (156 aa).

The protein belongs to the universal ribosomal protein uS7 family. Part of the 30S ribosomal subunit. Contacts proteins S9 and S11.

Functionally, one of the primary rRNA binding proteins, it binds directly to 16S rRNA where it nucleates assembly of the head domain of the 30S subunit. Is located at the subunit interface close to the decoding center, probably blocks exit of the E-site tRNA. This chain is Small ribosomal subunit protein uS7, found in Shouchella clausii (strain KSM-K16) (Alkalihalobacillus clausii).